The primary structure comprises 293 residues: Homoserine kinase (293 aa).

80-90 is a binding site for ATP; that stretch reads RPASGLGSSAA.

This sequence belongs to the GHMP kinase family. Homoserine kinase subfamily.

The protein resides in the cytoplasm. The enzyme catalyses L-homoserine + ATP = O-phospho-L-homoserine + ADP + H(+). The protein operates within amino-acid biosynthesis; L-threonine biosynthesis; L-threonine from L-aspartate: step 4/5. Catalyzes the ATP-dependent phosphorylation of L-homoserine to L-homoserine phosphate. This is Homoserine kinase from Halorubrum lacusprofundi (strain ATCC 49239 / DSM 5036 / JCM 8891 / ACAM 34).